A 492-amino-acid polypeptide reads, in one-letter code: 6-phosphogluconate dehydrogenase, decarboxylating 2 (492 aa).

NADP(+) contacts are provided by residues 12-17, 35-37, 77-79, and Asn-105; these read GLAVMG, NRT, and IKA. Residues Asn-105 and 131 to 133 contribute to the substrate site; that span reads SGG. Lys-185 serves as the catalytic Proton acceptor. Residue 188–189 coordinates substrate; the sequence is HN. Catalysis depends on Glu-192, which acts as the Proton donor. Substrate contacts are provided by Tyr-193, Lys-262, Arg-289, Arg-449, and His-455.

This sequence belongs to the 6-phosphogluconate dehydrogenase family. Homodimer.

It catalyses the reaction 6-phospho-D-gluconate + NADP(+) = D-ribulose 5-phosphate + CO2 + NADPH. It participates in carbohydrate degradation; pentose phosphate pathway; D-ribulose 5-phosphate from D-glucose 6-phosphate (oxidative stage): step 3/3. Functionally, catalyzes the oxidative decarboxylation of 6-phosphogluconate to ribulose 5-phosphate and CO(2), with concomitant reduction of NADP to NADPH. This Saccharomyces cerevisiae (strain ATCC 204508 / S288c) (Baker's yeast) protein is 6-phosphogluconate dehydrogenase, decarboxylating 2 (GND2).